The following is a 250-amino-acid chain: Coproheme decarboxylase (250 aa).

Fe-coproporphyrin III-binding positions include R131, Y145–K149, H172, and Q185. Y145 is a catalytic residue.

The protein belongs to the ChdC family. Type 1 subfamily. Fe-coproporphyrin III serves as cofactor.

The enzyme catalyses Fe-coproporphyrin III + 2 H2O2 + 2 H(+) = heme b + 2 CO2 + 4 H2O. The catalysed reaction is Fe-coproporphyrin III + H2O2 + H(+) = harderoheme III + CO2 + 2 H2O. It catalyses the reaction harderoheme III + H2O2 + H(+) = heme b + CO2 + 2 H2O. The protein operates within porphyrin-containing compound metabolism; protoheme biosynthesis. Functionally, involved in coproporphyrin-dependent heme b biosynthesis. Catalyzes the decarboxylation of Fe-coproporphyrin III (coproheme) to heme b (protoheme IX), the last step of the pathway. The reaction occurs in a stepwise manner with a three-propionate intermediate. The chain is Coproheme decarboxylase from Staphylococcus aureus (strain MSSA476).